The sequence spans 362 residues: Phosphoserine aminotransferase (362 aa).

L-glutamate contacts are provided by Ser9 and Arg42. Pyridoxal 5'-phosphate contacts are provided by residues 76–77 (GR), Trp102, Thr153, Asp174, and Gln197. Lys198 carries the N6-(pyridoxal phosphate)lysine modification. A pyridoxal 5'-phosphate-binding site is contributed by 239 to 240 (NT).

It belongs to the class-V pyridoxal-phosphate-dependent aminotransferase family. SerC subfamily. Homodimer. It depends on pyridoxal 5'-phosphate as a cofactor.

It localises to the cytoplasm. It catalyses the reaction O-phospho-L-serine + 2-oxoglutarate = 3-phosphooxypyruvate + L-glutamate. The enzyme catalyses 4-(phosphooxy)-L-threonine + 2-oxoglutarate = (R)-3-hydroxy-2-oxo-4-phosphooxybutanoate + L-glutamate. It functions in the pathway amino-acid biosynthesis; L-serine biosynthesis; L-serine from 3-phospho-D-glycerate: step 2/3. It participates in cofactor biosynthesis; pyridoxine 5'-phosphate biosynthesis; pyridoxine 5'-phosphate from D-erythrose 4-phosphate: step 3/5. Catalyzes the reversible conversion of 3-phosphohydroxypyruvate to phosphoserine and of 3-hydroxy-2-oxo-4-phosphonooxybutanoate to phosphohydroxythreonine. This is Phosphoserine aminotransferase from Shigella boydii serotype 4 (strain Sb227).